Here is a 433-residue protein sequence, read N- to C-terminus: tRNA(Ile)-lysidine synthase (433 aa).

Residue 37–42 (SGGKDS) participates in ATP binding.

This sequence belongs to the tRNA(Ile)-lysidine synthase family.

Its subcellular location is the cytoplasm. The enzyme catalyses cytidine(34) in tRNA(Ile2) + L-lysine + ATP = lysidine(34) in tRNA(Ile2) + AMP + diphosphate + H(+). Ligates lysine onto the cytidine present at position 34 of the AUA codon-specific tRNA(Ile) that contains the anticodon CAU, in an ATP-dependent manner. Cytidine is converted to lysidine, thus changing the amino acid specificity of the tRNA from methionine to isoleucine. This is tRNA(Ile)-lysidine synthase from Leptospira interrogans serogroup Icterohaemorrhagiae serovar Lai (strain 56601).